A 427-amino-acid chain; its full sequence is Peptidase B (427 aa).

Lys-195 and Asp-200 together coordinate Mn(2+). Residue Lys-207 is part of the active site. Residues Asp-218, Asp-277, and Glu-279 each contribute to the Mn(2+) site. The active site involves Arg-281.

The protein belongs to the peptidase M17 family. Homohexamer. Mn(2+) is required as a cofactor.

It is found in the cytoplasm. It carries out the reaction Release of an N-terminal amino acid, Xaa, from a peptide or arylamide. Xaa is preferably Glu or Asp but may be other amino acids, including Leu, Met, His, Cys and Gln.. Functionally, probably plays an important role in intracellular peptide degradation. The polypeptide is Peptidase B (Escherichia coli (strain ATCC 8739 / DSM 1576 / NBRC 3972 / NCIMB 8545 / WDCM 00012 / Crooks)).